Consider the following 129-residue polypeptide: Transcription antitermination protein NusB (129 aa).

The protein belongs to the NusB family.

Its function is as follows. Involved in transcription antitermination. Required for transcription of ribosomal RNA (rRNA) genes. Binds specifically to the boxA antiterminator sequence of the ribosomal RNA (rrn) operons. This Staphylococcus epidermidis (strain ATCC 35984 / DSM 28319 / BCRC 17069 / CCUG 31568 / BM 3577 / RP62A) protein is Transcription antitermination protein NusB.